Here is a 120-residue protein sequence, read N- to C-terminus: DNA-directed RNA polymerase II subunit rpb11 (120 aa).

It belongs to the archaeal Rpo11/eukaryotic RPB11/RPC19 RNA polymerase subunit family. In terms of assembly, component of the RNA polymerase II (Pol II) complex consisting of 12 subunits.

It localises to the nucleus. Functionally, DNA-dependent RNA polymerase catalyzes the transcription of DNA into RNA using the four ribonucleoside triphosphates as substrates. Component of RNA polymerase II which synthesizes mRNA precursors and many functional non-coding RNAs. Pol II is the central component of the basal RNA polymerase II transcription machinery. It is composed of mobile elements that move relative to each other. RPB11 is part of the core element with the central large cleft. The polypeptide is DNA-directed RNA polymerase II subunit rpb11 (polr2j) (Dictyostelium discoideum (Social amoeba)).